We begin with the raw amino-acid sequence, 977 residues long: Vacuolar membrane protease (977 aa).

The Cytoplasmic portion of the chain corresponds to 1–17 (MARSRTAGRCNPFAFYR). Residues 18-38 (VPVTVFVTLIYVALLAPIIVV) form a helical membrane-spanning segment. Residues 39-383 (HHILPAVPES…AFAVFEIHTL (345 aa)) are Vacuolar-facing. Asparagine 113 and asparagine 116 each carry an N-linked (GlcNAc...) asparagine glycan. Zn(2+) is bound by residues histidine 166 and aspartate 178. The Proton acceptor role is filled by glutamate 212. Positions 213, 238, and 311 each coordinate Zn(2+). Residues 384–404 (FALSVTLLIVGPLTLFITSII) form a helical membrane-spanning segment. Topologically, residues 405–438 (LANQDRMYLFGISVPVDDGFGSVPLRGWRGFFRF) are cytoplasmic. Residues 439–459 (PFIFGSTTASVVALAYLMAKI) traverse the membrane as a helical segment. The Vacuolar portion of the chain corresponds to 460-469 (NPMIAHSSEY). A helical membrane pass occupies residues 470 to 490 (AVWSMMISAWVFVAWFLSRIA). The Cytoplasmic portion of the chain corresponds to 491 to 500 (NFARPSALHR). A helical membrane pass occupies residues 501-521 (IYVLTWMFLLTWVLLVITTVY). Topologically, residues 522–525 (ENRD) are vacuolar. A helical membrane pass occupies residues 526-546 (GIASGYFVIFYAFGTFMATWI). Topologically, residues 547–659 (SYLELFSLPK…WSANLPKWTW (113 aa)) are cytoplasmic. Polar residues predominate over residues 566 to 576 (GQISSRPTSLG). The segment at 566 to 604 (GQISSRPTSLGGSRLLTPSGESVGQHPEDEEPTESTSLL) is disordered. Residues 660–680 (ILQFLLIAPIVIILIGQLGLL) form a helical membrane-spanning segment. The Vacuolar portion of the chain corresponds to 681 to 696 (ITSAIHQTMQDGSSTL). A helical transmembrane segment spans residues 697–717 (VPYLIIALLTTFLFMPTLPFI). Residues 718–726 (HRYTYHIPT) are Cytoplasmic-facing. A helical membrane pass occupies residues 727–747 (FLFLIFVATLVYNLVAFPFSG). Residues 748 to 977 (NNRTKLFFLQ…LVKGSRSFEV (230 aa)) lie on the Vacuolar side of the membrane. Residues asparagine 749 and asparagine 791 are each glycosylated (N-linked (GlcNAc...) asparagine).

It belongs to the peptidase M28 family. The cofactor is Zn(2+).

It is found in the vacuole membrane. Functionally, may be involved in vacuolar sorting and osmoregulation. This Talaromyces marneffei (strain ATCC 18224 / CBS 334.59 / QM 7333) (Penicillium marneffei) protein is Vacuolar membrane protease.